The following is a 406-amino-acid chain: 2,3-bisphosphoglycerate-independent phosphoglycerate mutase (406 aa).

Belongs to the BPG-independent phosphoglycerate mutase family. A-PGAM subfamily.

The enzyme catalyses (2R)-2-phosphoglycerate = (2R)-3-phosphoglycerate. It participates in carbohydrate degradation; glycolysis; pyruvate from D-glyceraldehyde 3-phosphate: step 3/5. Its function is as follows. Catalyzes the interconversion of 2-phosphoglycerate and 3-phosphoglycerate. The sequence is that of 2,3-bisphosphoglycerate-independent phosphoglycerate mutase from Methanococcus maripaludis (strain C5 / ATCC BAA-1333).